A 467-amino-acid chain; its full sequence is Metal transporter cnnm-4 (467 aa).

Residues M1–R110 are Extracellular-facing. Residue N61 is glycosylated (N-linked (GlcNAc...) asparagine). Positions D107 to N293 constitute a CNNM transmembrane domain. A helical transmembrane segment spans residues V111–L131. At N132–N170 the chain is on the cytoplasmic side. The helical transmembrane segment at F171–M191 threads the bilayer. Topologically, residues N192–E196 are extracellular. A helical transmembrane segment spans residues F197–F217. At T218 to Q238 the chain is on the cytoplasmic side. The helical transmembrane segment at Y239–L259 threads the bilayer. Residues N260–E467 are Extracellular-facing. 2 CBS domains span residues M317–T381 and K394–E461. N364 carries N-linked (GlcNAc...) asparagine glycosylation.

It belongs to the ACDP family.

It localises to the cell membrane. Probable metal transporter. Probably acts redundantly with the other metal transport proteins cnnm-1, cnnm-2, cnnm-3 and cnnm-5 to regulate Mg(2+) homeostasis. The chain is Metal transporter cnnm-4 from Caenorhabditis elegans.